The following is a 236-amino-acid chain: Demethylmenaquinone methyltransferase (236 aa).

Residues T58, D79, and 106 to 107 (NA) contribute to the S-adenosyl-L-methionine site.

Belongs to the class I-like SAM-binding methyltransferase superfamily. MenG/UbiE family.

It carries out the reaction a 2-demethylmenaquinol + S-adenosyl-L-methionine = a menaquinol + S-adenosyl-L-homocysteine + H(+). It functions in the pathway quinol/quinone metabolism; menaquinone biosynthesis; menaquinol from 1,4-dihydroxy-2-naphthoate: step 2/2. Its function is as follows. Methyltransferase required for the conversion of demethylmenaquinol (DMKH2) to menaquinol (MKH2). This Listeria welshimeri serovar 6b (strain ATCC 35897 / DSM 20650 / CCUG 15529 / CIP 8149 / NCTC 11857 / SLCC 5334 / V8) protein is Demethylmenaquinone methyltransferase.